Here is a 1035-residue protein sequence, read N- to C-terminus: Potassium-transporting ATPase alpha chain 1 (1035 aa).

The segment at 1 to 41 (MGKAENYELYSVELGPGPGGDMAAKMSKKKKAGGGGGKRKE) is disordered. Residues 1–98 (MGKAENYELY…NALRPPRGTP (98 aa)) are Cytoplasmic-facing. 2 positions are modified to phosphotyrosine: Tyr7 and Tyr10. The span at 26–40 (MSKKKKAGGGGGKRK) shows a compositional bias: basic residues. Ser27 carries the phosphoserine modification. The chain crosses the membrane as a helical span at residues 99-119 (EYVKFARQLAGGLQCLMWVAA). Topologically, residues 120–142 (AICLIAFAIQASEGDLTTDDNLY) are lumenal. A helical transmembrane segment spans residues 143 to 163 (LAIALIAVVVVTGCFGYYQEF). Over 164–299 (KSTNIIASFK…NEKTPIAIEI (136 aa)) the chain is Cytoplasmic. A helical transmembrane segment spans residues 300–319 (EHFVDIIAGLAILFGATFFI). Residues 320–331 (VAMCIGYTFLRA) lie on the Lumenal side of the membrane. A helical membrane pass occupies residues 332–349 (MVFFMAIVVAYVPEGLLA). Positions 340, 341, 343, and 345 each coordinate K(+). The Cytoplasmic segment spans residues 350–783 (TVTVCLSLTA…EQGRLIFDNL (434 aa)). Asp387 serves as the catalytic 4-aspartylphosphate intermediate. Asp387 and Thr389 together coordinate Mg(2+). Phosphoserine is present on residues Ser463 and Ser601. Asp728 and Asp732 together coordinate Mg(2+). Residues 784-803 (KKSIAYTLTKNIPELTPYLI) form a helical membrane-spanning segment. Position 797 (Glu797) interacts with K(+). At 804–813 (YITVSVPLPL) the chain is on the lumenal side. Residues 814-834 (GCITILFIELCTDIFPSVSLA) form a helical membrane-spanning segment. Residue Glu822 coordinates K(+). The Cytoplasmic portion of the chain corresponds to 835-854 (YEKAESDIMHLRPRNPKRDR). A Phosphoserine modification is found at Ser840. The helical transmembrane segment at 855–877 (LVNEPLAAYSYFQIGAIQSFAGF) threads the bilayer. At 878–929 (TDYFTAMAQEGWFPLLCVGLRAQWEDHHLQDLQDSYGQEWTFGQRLYQQYTC) the chain is on the lumenal side. A helical membrane pass occupies residues 930-949 (YTVFFISIEVCQIADVLIRK). Over 950–963 (TRRLSAFQQGFFRN) the chain is Cytoplasmic. Position 954 is a phosphoserine; by PKA (Ser954). A helical transmembrane segment spans residues 964-982 (KILVIAIVFQVCIGCFLCY). Over 983 to 997 (CPGMPNIFNFMPIRF) the chain is Lumenal. Residues 998-1018 (QWWLVPLPYGILIFVYDEIRK) form a helical membrane-spanning segment. Residues 1019–1035 (LGVRCCPGSWWDQELYY) are Cytoplasmic-facing.

The protein belongs to the cation transport ATPase (P-type) (TC 3.A.3) family. Type IIC subfamily. In terms of assembly, the gastric H(+)/K(+) ATPase pump is composed of the catalytic alpha subunit ATP4A and the regulatory beta subunit ATP4B. Interacts (via the P-domain) with ATP4B (via N-terminus); this interaction stabilizes the lumenal-open E2 conformation state and prevents the reverse reaction of the transport cycle. As to expression, expressed in gastric parietal cells (at protein level).

It is found in the apical cell membrane. The enzyme catalyses K(+)(out) + ATP + H2O + H(+)(in) = K(+)(in) + ADP + phosphate + 2 H(+)(out). Functionally, the catalytic subunit of the gastric H(+)/K(+) ATPase pump which transports H(+) ions in exchange for K(+) ions across the apical membrane of parietal cells. Uses ATP as an energy source to pump H(+) ions to the gastric lumen while transporting K(+) ion from the lumen into the cell. Remarkably generates a million-fold proton gradient across the gastric parietal cell membrane, acidifying the gastric juice down to pH 1. Within a transport cycle, the transfer of a H(+) ion across the membrane is coupled to ATP hydrolysis and is associated with a transient phosphorylation that shifts the pump conformation from inward-facing (E1) to outward-facing state (E2). The release of the H(+) ion in the stomach lumen is followed by binding of K(+) ion converting the pump conformation back to the E1 state. The chain is Potassium-transporting ATPase alpha chain 1 from Homo sapiens (Human).